The sequence spans 251 residues: Carbohydrate deacetylase (251 aa).

The Mg(2+) site is built by histidine 59 and histidine 122.

It belongs to the YdjC deacetylase family. As to quaternary structure, homodimer. Mg(2+) is required as a cofactor.

Its function is as follows. Probably catalyzes the deacetylation of acetylated carbohydrates an important step in the degradation of oligosaccharides. The chain is Carbohydrate deacetylase from Vibrio parahaemolyticus serotype O3:K6 (strain RIMD 2210633).